Here is a 430-residue protein sequence, read N- to C-terminus: tRNA(Ile)-lysidine synthase (430 aa).

27-32 lines the ATP pocket; it reads SGGSDS.

The protein belongs to the tRNA(Ile)-lysidine synthase family.

The protein resides in the cytoplasm. The catalysed reaction is cytidine(34) in tRNA(Ile2) + L-lysine + ATP = lysidine(34) in tRNA(Ile2) + AMP + diphosphate + H(+). Functionally, ligates lysine onto the cytidine present at position 34 of the AUA codon-specific tRNA(Ile) that contains the anticodon CAU, in an ATP-dependent manner. Cytidine is converted to lysidine, thus changing the amino acid specificity of the tRNA from methionine to isoleucine. The polypeptide is tRNA(Ile)-lysidine synthase (Rickettsia typhi (strain ATCC VR-144 / Wilmington)).